The primary structure comprises 168 residues: Large ribosomal subunit protein uL10 (168 aa).

Belongs to the universal ribosomal protein uL10 family. In terms of assembly, part of the ribosomal stalk of the 50S ribosomal subunit. The N-terminus interacts with L11 and the large rRNA to form the base of the stalk. The C-terminus forms an elongated spine to which L12 dimers bind in a sequential fashion forming a multimeric L10(L12)X complex.

Functionally, forms part of the ribosomal stalk, playing a central role in the interaction of the ribosome with GTP-bound translation factors. This chain is Large ribosomal subunit protein uL10, found in Paracidovorax citrulli (strain AAC00-1) (Acidovorax citrulli).